A 434-amino-acid polypeptide reads, in one-letter code: Xylose isomerase (434 aa).

Active-site residues include H99 and D102. Residues E230, E266, H269, D294, D305, D307, and D337 each coordinate Mg(2+).

It belongs to the xylose isomerase family. In terms of assembly, homotetramer. It depends on Mg(2+) as a cofactor.

The protein localises to the cytoplasm. The catalysed reaction is alpha-D-xylose = alpha-D-xylulofuranose. This chain is Xylose isomerase, found in Dinoroseobacter shibae (strain DSM 16493 / NCIMB 14021 / DFL 12).